The following is a 218-amino-acid chain: Probable carboxylesterase clz11 (218 aa).

The Involved in the stabilization of the negatively charged intermediate by the formation of the oxyanion hole signature appears at 7 to 9 (LVG). Residue S77 is part of the active site.

This sequence belongs to the 'GDXG' lipolytic enzyme family.

The enzyme catalyses a carboxylic ester + H2O = an alcohol + a carboxylate + H(+). The protein operates within secondary metabolite biosynthesis. Functionally, probable carboxylesterase; part of the gene cluster that mediates the biosynthesis of squalestatin S1 (SQS1, also known as zaragozic acid A), a heavily oxidized fungal polyketide that offers potent cholesterol lowering activity by targeting squalene synthase (SS). SQS1 is composed of a 2,8-dioxobicyclic[3.2.1]octane-3,4,5-tricarboxyclic acid core that is connected to two lipophilic polyketide arms. These initial steps feature the priming of an unusual benzoic acid starter unit onto the highly reducing polyketide synthase clz14, followed by oxaloacetate extension and product release to generate a tricarboxylic acid containing product. The phenylalanine ammonia lyase (PAL) clz10 and the acyl-CoA ligase clz12 are involved in transforming phenylalanine into benzoyl-CoA. The citrate synthase-like protein clz17 is involved in connecting the C-alpha-carbons of the hexaketide chain and oxaloacetate to afford the tricarboxylic acid unit. The potential hydrolytic enzymes, clz11 and clz13, are in close proximity to pks2 and may participate in product release. On the other side, the tetraketide arm is synthesized by a the squalestatin tetraketide synthase clz2 and enzymatically esterified to the core in the last biosynthetic step, by the acetyltransferase clz6. The biosynthesis of the tetraketide must involve 3 rounds of chain extension. After the first and second rounds methyl-transfer occurs, and in all rounds of extension the ketoreductase and dehydratase are active. The enoyl reductase and C-MeT of clz2 are not active in the final round of extension. The acetyltransferase clz6 appears to have a broad substrate selectivity for its acyl CoA substrate, allowing the in vitro synthesis of novel squalestatins. The biosynthesis of SQS1 requires several oxidative steps likely performed by oxidoreductases clz3, clz15 and clz16. Finally, in support of the identification of the cluster as being responsible for SQS1 production, the cluster contains a gene encoding a putative squalene synthase (SS) clz20, suggesting a likely mechanism for self-resistance. In Cochliobolus lunatus (Filamentous fungus), this protein is Probable carboxylesterase clz11.